Reading from the N-terminus, the 225-residue chain is Protein ZW2 (225 aa).

The DOG1 domain maps to 7 to 225; that stretch reads SETFASFFND…FYLRLRDLGV (219 aa).

May be involved in the regulation of abscisic acid (ABA) sensitivity. The protein is Protein ZW2 of Arabidopsis thaliana (Mouse-ear cress).